The following is a 226-amino-acid chain: MNENLFTSFITPTMMGLPIVILVIVFPAMLYPSPNRLINNRLISIQQWLVQLILKQMLLIHNSKGRTWALMLISLILFIGSTNLLGLVPYTFTPTTQLSMNLGMAIPLWAGAVITGFRHKAKASLAHFLPQGTPITLIPMLVVIETISLFIQPMALAIRLTANITAGHLLMHLIGGAVLALTSISPAAATITFIILLLLTILEFAVALIQAYVFTLLVSLYLHDNT.

The next 6 helical transmembrane spans lie at 9–29, 68–88, 97–117, 138–158, 164–184, and 201–223; these read FITP…FPAM, WALM…LGLV, QLSM…ITGF, IPML…ALAI, ITAG…LTSI, and ILEF…LYLH.

It belongs to the ATPase A chain family. In terms of assembly, component of the ATP synthase complex composed at least of ATP5F1A/subunit alpha, ATP5F1B/subunit beta, ATP5MC1/subunit c (homooctomer), MT-ATP6/subunit a, MT-ATP8/subunit 8, ATP5ME/subunit e, ATP5MF/subunit f, ATP5MG/subunit g, ATP5MK/subunit k, ATP5MJ/subunit j, ATP5F1C/subunit gamma, ATP5F1D/subunit delta, ATP5F1E/subunit epsilon, ATP5PF/subunit F6, ATP5PB/subunit b, ATP5PD/subunit d, ATP5PO/subunit OSCP. ATP synthase complex consists of a soluble F(1) head domain (subunits alpha(3) and beta(3)) - the catalytic core - and a membrane F(0) domain - the membrane proton channel (subunits c, a, 8, e, f, g, k and j). These two domains are linked by a central stalk (subunits gamma, delta, and epsilon) rotating inside the F1 region and a stationary peripheral stalk (subunits F6, b, d, and OSCP). Interacts with DNAJC30; interaction is direct.

It localises to the mitochondrion inner membrane. The enzyme catalyses H(+)(in) = H(+)(out). Its function is as follows. Subunit a, of the mitochondrial membrane ATP synthase complex (F(1)F(0) ATP synthase or Complex V) that produces ATP from ADP in the presence of a proton gradient across the membrane which is generated by electron transport complexes of the respiratory chain. ATP synthase complex consist of a soluble F(1) head domain - the catalytic core - and a membrane F(1) domain - the membrane proton channel. These two domains are linked by a central stalk rotating inside the F(1) region and a stationary peripheral stalk. During catalysis, ATP synthesis in the catalytic domain of F(1) is coupled via a rotary mechanism of the central stalk subunits to proton translocation. With the subunit c (ATP5MC1), forms the proton-conducting channel in the F(0) domain, that contains two crucial half-channels (inlet and outlet) that facilitate proton movement from the mitochondrial intermembrane space (IMS) into the matrix. Protons are taken up via the inlet half-channel and released through the outlet half-channel, following a Grotthuss mechanism. This is ATP synthase F(0) complex subunit a from Dugong dugon (Dugong).